The primary structure comprises 80 residues: Acyl carrier protein (80 aa).

In terms of domain architecture, Carrier spans 4 to 79; it reads EAILEKVRSI…DAVKYIEDKQ (76 aa). Residue S39 is modified to O-(pantetheine 4'-phosphoryl)serine.

Belongs to the acyl carrier protein (ACP) family. Post-translationally, 4'-phosphopantetheine is transferred from CoA to a specific serine of apo-ACP by AcpS. This modification is essential for activity because fatty acids are bound in thioester linkage to the sulfhydryl of the prosthetic group.

The protein resides in the cytoplasm. The protein operates within lipid metabolism; fatty acid biosynthesis. Carrier of the growing fatty acid chain in fatty acid biosynthesis. This is Acyl carrier protein from Synechococcus sp. (strain CC9902).